A 956-amino-acid chain; its full sequence is Netrin receptor UNC5D (956 aa).

The signal sequence occupies residues 1–30; it reads MGTGAADGSRGARRWLPWLGLFFWAAGAAA. At 31–382 the chain is on the extracellular side; sequence ARGADGSEIL…SRRGIENASD (352 aa). Residues 52–149 enclose the Ig-like domain; the sequence is PHFIEEPEDA…LGTSKSRKAS (98 aa). Cystine bridges form between Cys73–Cys134, Cys85–Cys132, Cys178–Cys229, Cys262–Cys299, Cys266–Cys303, Cys277–Cys289, Cys318–Cys352, Cys322–Cys357, and Cys330–Cys342. Positions 89 to 91 are important for interaction with FLRT2; the sequence is WVH. N-linked (GlcNAc...) asparagine glycans are attached at residues Asn115 and Asn226. One can recognise an Ig-like C2-type domain in the interval 151-242; the sequence is RIAYLRKNFE…NIVAKRRSLS (92 aa). 2 TSP type-1 domains span residues 250–304 and 306–358; these read NGGW…ALCP and DGSW…GLCI. Residues Asn351 and Asn379 are each glycosylated (N-linked (GlcNAc...) asparagine). The helical transmembrane segment at 383-403 threads the bilayer; the sequence is IALYSGLGAAVVAVAVLVIGV. Topologically, residues 404–956 are cytoplasmic; that stretch reads TLYRRSHSDY…DFNYSRQNGL (553 aa). One can recognise a ZU5 domain in the interval 545–685; it reads LRTTGVFGHL…FGTYALTGEP (141 aa). The Death domain maps to 862–939; sequence QRICATFDTP…RTHTKLSNIT (78 aa).

The protein belongs to the unc-5 family. Interacts (via extracellular domain) with FLRT2 and FLRT3 (via extracellular domain); the interaction is direct. Has higher affinity for FLRT2. Identified in a complex with FLRT3 and ADGRL3; does not interact with ADGRL3 by itself. In terms of processing, proteolytically cleaved by caspases during apoptosis. The cleavage does not take place when the receptor is associated with netrin ligand. Its cleavage by caspases is required to induce apoptosis. In terms of tissue distribution, detected in multipolar cells in the brain subventricular zone (at protein level). Detected in embryonic brain neocortex, especially in the subventricular zone. Detected in multipolar cells in the brain subventricular zone. Detected in brain neocortex from young pups, especially in the somatosensory cortex. Expressed in developing limb and mammary gland.

Its subcellular location is the cell membrane. In terms of biological role, receptor for the netrin NTN4 that promotes neuronal cell survival. Plays a role in cell-cell adhesion and cell guidance. Receptor for netrin involved in cell migration. Plays a role in the regulation of neuronal cell migration in the developing brain via its interaction with FLRT2. Plays a role in axon guidance by mediating axon repulsion of neuronal growth cones in the developing nervous system upon ligand binding. May play a role in apoptosis in response to DNA damage. It also acts as a dependence receptor required for apoptosis induction when not associated with netrin ligand. Mediates cell-cell adhesion via its interaction with FLRT3 on an adjacent cell. The sequence is that of Netrin receptor UNC5D (Unc5d) from Mus musculus (Mouse).